The sequence spans 300 residues: Protein Bel-1 (300 aa).

Disordered regions lie at residues 1–20 (MDSYQEEEPVASTSGLQDLQ), 26–50 (VGPENAGEGDLVIAEEPEENPRRPR), and 185–237 (KPST…GDTV). Positions 11 to 20 (ASTSGLQDLQ) are enriched in polar residues. Residues 89–200 (SKSICKRLIL…PEGPKPRRRH (112 aa)) mediate DNA binding. Over residues 201-210 (DPVLRCDMFE) the composition is skewed to basic and acidic residues. The span at 211–222 (KHHKPRPKRSRK) shows a compositional bias: basic residues. The Nuclear localization signal motif lies at 214–223 (KPRPKRSRKR). The transactivation domain stretch occupies residues 224–300 (SIDHESCASS…PSGSGEHSVL (77 aa)).

In terms of assembly, homodimer or homomultimer. Forms complexes with the host nuclear factors NFIA, NFIB, NFIC or NFIX.

The protein localises to the host nucleus. Transcriptional transactivator that activates the viral internal promoter (IP), thereby enhancing its own expression. This transactivation is repressed by nuclear factor I. Also transactivates the long terminal repeat (LTR) promoter, thereby inducing structural gene expression, initiating the late phase of infection. It is therefore a key regulator of viral gene expression. It directly binds to and activates DNA target sites of viral promoters and those of distinct cellular genes. Required for viral replication. The chain is Protein Bel-1 (bel1) from Pan troglodytes (Chimpanzee).